A 186-amino-acid polypeptide reads, in one-letter code: Large ribosomal subunit protein uL10 (186 aa).

This sequence belongs to the universal ribosomal protein uL10 family. Part of the ribosomal stalk of the 50S ribosomal subunit. The N-terminus interacts with L11 and the large rRNA to form the base of the stalk. The C-terminus forms an elongated spine to which L12 dimers bind in a sequential fashion forming a multimeric L10(L12)X complex.

In terms of biological role, forms part of the ribosomal stalk, playing a central role in the interaction of the ribosome with GTP-bound translation factors. The chain is Large ribosomal subunit protein uL10 from Roseiflexus sp. (strain RS-1).